We begin with the raw amino-acid sequence, 207 residues long: Fibroblast growth factor 18 (207 aa).

An N-terminal signal peptide occupies residues 1–27 (MYSAPSTCTCLCLHFLLLCFQVQVLAA). N-linked (GlcNAc...) asparagine glycosylation occurs at Asn39. An intrachain disulfide couples Cys109 to Cys127. Asn137 carries N-linked (GlcNAc...) asparagine glycosylation.

It belongs to the heparin-binding growth factors family. As to quaternary structure, interacts with FGFR3 and FGFR4.

It is found in the secreted. Plays an important role in the regulation of cell proliferation, cell differentiation and cell migration. Required for normal ossification and bone development. Stimulates hepatic and intestinal proliferation. The protein is Fibroblast growth factor 18 (FGF18) of Bos taurus (Bovine).